A 298-amino-acid polypeptide reads, in one-letter code: Tritrans,polycis-undecaprenyl-diphosphate synthase (geranylgeranyl-diphosphate specific) (298 aa).

Asp-35 is a catalytic residue. Residue Asp-35 participates in Mg(2+) binding. Residues 36–39, Arg-48, His-52, and 80–82 each bind substrate; these read GNRR and STE. Catalysis depends on Asn-83, which acts as the Proton acceptor. Substrate-binding positions include Phe-84, Arg-86, Arg-208, and 214 to 216; that span reads RIS.

The protein belongs to the UPP synthase family. Homodimer. Requires Mg(2+) as cofactor.

It catalyses the reaction geranylgeranyl diphosphate + 7 isopentenyl diphosphate = tri-trans,hepta-cis-undecaprenyl diphosphate + 7 diphosphate. Functionally, catalyzes the sequential condensation of isopentenyl diphosphate (IPP) with geranylgeranyl diphosphate (GGPP) to yield (2Z,6Z,10Z,14Z,18Z,22Z,26Z,30E,34E,38E)-undecaprenyl diphosphate (tritrans,heptacis-UPP). It is probably the precursor of glycosyl carrier lipids. The sequence is that of Tritrans,polycis-undecaprenyl-diphosphate synthase (geranylgeranyl-diphosphate specific) from Methanosarcina mazei (strain ATCC BAA-159 / DSM 3647 / Goe1 / Go1 / JCM 11833 / OCM 88) (Methanosarcina frisia).